The sequence spans 115 residues: Large ribosomal subunit protein bL19 (115 aa).

This sequence belongs to the bacterial ribosomal protein bL19 family.

Its function is as follows. This protein is located at the 30S-50S ribosomal subunit interface and may play a role in the structure and function of the aminoacyl-tRNA binding site. The protein is Large ribosomal subunit protein bL19 of Tolumonas auensis (strain DSM 9187 / NBRC 110442 / TA 4).